The following is a 311-amino-acid chain: Pyrimidine-specific ribonucleoside hydrolase RihA (311 aa).

Histidine 240 is a catalytic residue.

It belongs to the IUNH family. RihA subfamily.

In terms of biological role, hydrolyzes cytidine or uridine to ribose and cytosine or uracil, respectively. The protein is Pyrimidine-specific ribonucleoside hydrolase RihA of Shigella flexneri serotype 5b (strain 8401).